We begin with the raw amino-acid sequence, 127 residues long: Large ribosomal subunit protein bL17 (127 aa).

This sequence belongs to the bacterial ribosomal protein bL17 family. As to quaternary structure, part of the 50S ribosomal subunit. Contacts protein L32.

This is Large ribosomal subunit protein bL17 from Lactobacillus johnsonii (strain CNCM I-12250 / La1 / NCC 533).